Reading from the N-terminus, the 250-residue chain is Functional amyloid subunit FapC (250 aa).

Residues 1–24 (MKPTMALKPLVFALAALMAVAAQA) form the signal peptide. The stretch at 62-95 (NNAGANGSLSNSKGNLGANIAAGSGNQQDNAAAI) is one FapC_R1 repeat. Residues 96–126 (TSSAGDAATVFAVADIYQESKDNKFTNKGTQ) are linker 1. One copy of the FapC_R2 repeat lies at 127 to 160 (NNALLNNSANNSSGNVGVNVAAGQGNQQKNNLAI). The interval 161-199 (VTADGKNVAAASNTEQVSLDNHFLNEASSKHSYKPQYVV) is linker 2. One copy of the FapC_R3 repeat lies at 200-233 (NNAGLLNSANNASGNIGVNVAAGAGNQQSNTLTL). Residues 237–240 (CTVC) carry the Cys-X-X-Cys motif.

The protein belongs to the FapB/FapC family. The major component of purified amyloid fibrils. Forms fibrils in vitro; in the presence of FapA the fibrils are about 50% wider. Interacts with FapA. Fibrillates in vitro; this is inhibited by FapA. Fibrils are resistant to boiling in 2% (weight/vol) SDS and require &gt;90% (vol/vol) formic acid to dissolve.

The protein localises to the fimbrium. The protein resides in the secreted. Functionally, the major functional amyloid subunit in this bacterium. Intrinsically disordered in its monomeric state. Upon overexpression of the endogenous six-gene locus (fapA-fapF) in situ, cells form large clumps during liquid growth, make large amounts of biofilm and produce amyloid fibrils. Expression of the 6 gene operon in E.coli strain BL21(DE3) induces flocculation and biofilm formation with copious extracellular fibrils. The sequence is that of Functional amyloid subunit FapC from Pseudomonas fluorescens.